Reading from the N-terminus, the 352-residue chain is tRNA uridine(34) hydroxylase (352 aa).

One can recognise a Rhodanese domain in the interval 144 to 238 (SDPDVILIDT…YLEEVPASDS (95 aa)). Catalysis depends on C198, which acts as the Cysteine persulfide intermediate.

Belongs to the TrhO family.

It carries out the reaction uridine(34) in tRNA + AH2 + O2 = 5-hydroxyuridine(34) in tRNA + A + H2O. Catalyzes oxygen-dependent 5-hydroxyuridine (ho5U) modification at position 34 in tRNAs. This is tRNA uridine(34) hydroxylase from Psychrobacter arcticus (strain DSM 17307 / VKM B-2377 / 273-4).